Consider the following 147-residue polypeptide: Glucosamine 6-phosphate N-acetyltransferase (147 aa).

The N-acetyltransferase domain maps to 7 to 147; the sequence is LELRVLEESD…AHERQMRLDL (141 aa). Residues Thr-28 and 86–88 each bind D-glucosamine 6-phosphate; that span reads EDV. Residues 88-90 and 96-101 each bind acetyl-CoA; these read VVV and GAGLGK. Residues 117–118 and Asp-122 contribute to the D-glucosamine 6-phosphate site; that span reads YK. 131–133 provides a ligand contact to acetyl-CoA; sequence YEK.

It belongs to the acetyltransferase family. GNA1 subfamily. As to quaternary structure, homodimer. In terms of processing, contains poly-N-acetyllactosamines.

The protein resides in the glycosome. It carries out the reaction D-glucosamine 6-phosphate + acetyl-CoA = N-acetyl-D-glucosamine 6-phosphate + CoA + H(+). It participates in nucleotide-sugar biosynthesis; UDP-N-acetyl-alpha-D-glucosamine biosynthesis; N-acetyl-alpha-D-glucosamine 1-phosphate from alpha-D-glucosamine 6-phosphate (route I): step 1/2. Involved in the biosynthesis of UDP-N-acetyl-alpha-D-glucosamine. Catalyzes the formation of N-acetyl-D-glucosamine 6-phosphate from acetyl-coenzyme A (acetyl-CoA) and D-glucosamine 6-phosphate. This chain is Glucosamine 6-phosphate N-acetyltransferase, found in Trypanosoma brucei brucei.